The chain runs to 333 residues: Adenosine deaminase (333 aa).

Residues H12 and H14 each contribute to the Zn(2+) site. Positions 14, 16, and 170 each coordinate substrate. H197 serves as a coordination point for Zn(2+). E200 functions as the Proton donor in the catalytic mechanism. Residue D278 participates in Zn(2+) binding. D279 lines the substrate pocket.

Belongs to the metallo-dependent hydrolases superfamily. Adenosine and AMP deaminases family. Adenosine deaminase subfamily. It depends on Zn(2+) as a cofactor.

It carries out the reaction adenosine + H2O + H(+) = inosine + NH4(+). The enzyme catalyses 2'-deoxyadenosine + H2O + H(+) = 2'-deoxyinosine + NH4(+). Catalyzes the hydrolytic deamination of adenosine and 2-deoxyadenosine. This is Adenosine deaminase from Salmonella paratyphi C (strain RKS4594).